Reading from the N-terminus, the 201-residue chain is Translation machinery-associated protein 22 (201 aa).

Residues 94–165 (VTIKRIERNK…EARAYIEKLL (72 aa)) form the SUI1 domain.

It belongs to the DENR family. As to quaternary structure, interacts with the 40S ribosomal subunit.

Its subcellular location is the cytoplasm. In Meyerozyma guilliermondii (strain ATCC 6260 / CBS 566 / DSM 6381 / JCM 1539 / NBRC 10279 / NRRL Y-324) (Yeast), this protein is Translation machinery-associated protein 22 (TMA22).